Here is a 1195-residue protein sequence, read N- to C-terminus: Protein PIP82 (1195 aa).

Low complexity predominate over residues 1-10; sequence MSHQEQQFQH. Disordered stretches follow at residues 1–55, 85–132, 291–471, 493–515, 544–567, 613–637, 702–771, 833–977, and 1060–1195; these read MSHQ…IGSS, KLRG…SQQF, NTFD…TANL, KVAK…GASG, QRNA…GHEP, EEDN…GIAT, MSPV…IVPK, SAGS…VKTS, and QITV…VVEI. The span at 11–26 shows a compositional bias: basic residues; it reads YPHHQHHHHHHHHHIH. Residues 37–50 are compositionally biased toward basic and acidic residues; the sequence is RSSDLEPNRSRNTD. Residues 109–118 show a composition bias toward low complexity; the sequence is GSAKDGAGAA. Residues 119 to 132 show a composition bias toward polar residues; sequence QQTHLQVAGQSQQF. A compositionally biased stretch (basic and acidic residues) spans 300-313; that stretch reads HEQFERGKISHETD. Residues 351 to 360 are compositionally biased toward low complexity; it reads QQAAAEESPQ. The segment covering 361-371 has biased composition (pro residues); it reads ANPPPPPPPRP. Positions 400–450 are phospho-regulated basic and hydrophobic (PRBH) motif; the sequence is ETTKTAENADENNASRKLSIRQNIKRLRKSIKRPSKIKSKAAAPVPDSDEE. The span at 422 to 438 shows a compositional bias: basic residues; that stretch reads NIKRLRKSIKRPSKIKS. The segment covering 494 to 505 has biased composition (basic and acidic residues); it reads VAKEPEELETKA. Polar residues predominate over residues 545–560; the sequence is RNANNQNATTSKQPKP. 2 stretches are compositionally biased toward polar residues: residues 732–742 and 856–867; these read SGPQKSMSYSP and RVQSPQIGNSRE. Acidic residues predominate over residues 872 to 891; that stretch reads QEEEDKEAERDSEEEEEERD. Composition is skewed to pro residues over residues 898-910 and 925-939; these read SESP…PQRR and VPPP…PPPS. Residues 940–968 show a composition bias toward low complexity; it reads VETIPSVASLPSPAPVTRSMAQRSASMSR. Residues 1075–1085 are compositionally biased toward polar residues; it reads QSDQSDQSAHQ. Residues 1086 to 1095 are compositionally biased toward basic and acidic residues; that stretch reads EITDTRKTKS. Positions 1102-1111 are enriched in polar residues; the sequence is RQNSNCSRSE. Low complexity-rich tracts occupy residues 1114–1149 and 1179–1195; these read SPLS…QNPS and SYYS…VVEI.

Post-translationally, phosphorylated by aPKC which lowers lipid affinity and promotes dissociation from the cell cortex. In the photoreceptor cells, aPKC-mediated phosphorylation leads to its displacement from the stalk apical cortex and thus restricts its localization to the rhabdomeric apical cortex where it functions. Dephosphorylation appears to be light-dependent. In terms of tissue distribution, restricted to photoreceptor cells (at protein level). Not detected until approximately 48hrs after puparium formation (APF) and then maintained in the photoreceptor cells post-eclosion (at protein level).

It is found in the cytoplasm. Its subcellular location is the cell cortex. The protein resides in the cytosol. The protein localises to the cell projection. It localises to the rhabdomere. Functionally, required for the morphological differentiation and maintenance of the rhabdomeric photoreceptor apical domain. Acts as a downstream component of the gl and Pph13 transcriptional pathway which is required for photoreceptor cell development. Likely to function by regulating the trafficking or retention of rhabdomeric proteins including the phototransduction proteins ninaE and didum. The protein is Protein PIP82 of Drosophila melanogaster (Fruit fly).